Consider the following 295-residue polypeptide: Nucleotide-binding protein YvcJ (295 aa).

16 to 23 (GMSGAGKT) is an ATP binding site. Position 67–70 (67–70 (DLRG)) interacts with GTP.

The protein belongs to the RapZ-like family.

In terms of biological role, displays ATPase and GTPase activities. Can also hydrolyze pNPP. May affect the expression of competence via the phosphorylation of a cellular component. In Bacillus subtilis (strain 168), this protein is Nucleotide-binding protein YvcJ (yvcJ).